Consider the following 141-residue polypeptide: Nucleoside diphosphate kinase (141 aa).

ATP is bound by residues Lys-11, Phe-59, Arg-87, Thr-93, Arg-104, and Asn-114. Residue His-117 is the Pros-phosphohistidine intermediate of the active site.

Belongs to the NDK family. In terms of assembly, homotetramer. Requires Mg(2+) as cofactor.

The protein resides in the cytoplasm. It catalyses the reaction a 2'-deoxyribonucleoside 5'-diphosphate + ATP = a 2'-deoxyribonucleoside 5'-triphosphate + ADP. The catalysed reaction is a ribonucleoside 5'-diphosphate + ATP = a ribonucleoside 5'-triphosphate + ADP. In terms of biological role, major role in the synthesis of nucleoside triphosphates other than ATP. The ATP gamma phosphate is transferred to the NDP beta phosphate via a ping-pong mechanism, using a phosphorylated active-site intermediate. This chain is Nucleoside diphosphate kinase, found in Acidovorax sp. (strain JS42).